The sequence spans 224 residues: TBP-related factor (224 aa).

The tract at residues 14 to 34 is disordered; that stretch reads RDNVAATSNAAANPHAALQPQ. The segment covering 17-34 has biased composition (low complexity); that stretch reads VAATSNAAANPHAALQPQ. Repeat copies occupy residues 51-127 and 141-218.

Belongs to the TBP family. In terms of tissue distribution, primary spermatocytes in the adult testis and in a subset of cells in the dorsal medial region of the embryonic CNS.

Its subcellular location is the nucleus. In terms of biological role, acts as a transcription factor. Binds to the TATA box promoter element which lies close to the position of transcription initiation. Its function is as follows. May be essential for embryonic development. The polypeptide is TBP-related factor (Trf) (Drosophila melanogaster (Fruit fly)).